The following is a 307-amino-acid chain: Porphobilinogen deaminase (307 aa).

Position 241 is an S-(dipyrrolylmethanemethyl)cysteine (Cys241).

Belongs to the HMBS family. Monomer. Dipyrromethane serves as cofactor.

The catalysed reaction is 4 porphobilinogen + H2O = hydroxymethylbilane + 4 NH4(+). The protein operates within porphyrin-containing compound metabolism; protoporphyrin-IX biosynthesis; coproporphyrinogen-III from 5-aminolevulinate: step 2/4. Tetrapolymerization of the monopyrrole PBG into the hydroxymethylbilane pre-uroporphyrinogen in several discrete steps. This is Porphobilinogen deaminase from Coxiella burnetii (strain CbuG_Q212) (Coxiella burnetii (strain Q212)).